A 122-amino-acid polypeptide reads, in one-letter code: Large ribosomal subunit protein uL14c (122 aa).

It belongs to the universal ribosomal protein uL14 family. Part of the 50S ribosomal subunit.

Its subcellular location is the plastid. The protein localises to the chloroplast. Functionally, binds to 23S rRNA. The sequence is that of Large ribosomal subunit protein uL14c from Chlorokybus atmophyticus (Soil alga).